We begin with the raw amino-acid sequence, 648 residues long: Macrolide export ATP-binding/permease protein MacB (648 aa).

The ABC transporter domain occupies 5–243 (LELCNVSRSY…QGVDAAVVNT (239 aa)). Residue 41-48 (GVSGSGKS) participates in ATP binding. The next 5 helical transmembrane spans lie at 273–293 (LLTMLGIIIGIASVVSIVVVG), 417–437 (ANVVGEVVLVGNMPVIVIGVA), 523–543 (LFLTLVAVISLVVGGIGVMNI), 578–598 (LVCLVGGALGISLSMFIAFML), and 611–631 (LTALASAFLCSTFTGILFGWL).

This sequence belongs to the ABC transporter superfamily. Macrolide exporter (TC 3.A.1.122) family. Homodimer. Part of the tripartite efflux system MacAB-TolC, which is composed of an inner membrane transporter, MacB, a periplasmic membrane fusion protein, MacA, and an outer membrane component, TolC. The complex forms a large protein conduit and can translocate molecules across both the inner and outer membranes. Interacts with MacA.

The protein localises to the cell inner membrane. Its function is as follows. Part of the tripartite efflux system MacAB-TolC. MacB is a non-canonical ABC transporter that contains transmembrane domains (TMD), which form a pore in the inner membrane, and an ATP-binding domain (NBD), which is responsible for energy generation. Confers resistance against macrolides. This is Macrolide export ATP-binding/permease protein MacB from Salmonella paratyphi A (strain ATCC 9150 / SARB42).